The primary structure comprises 386 residues: GTPase Obg (386 aa).

The region spanning M1–L159 is the Obg domain. The OBG-type G domain maps to A160 to E333. GTP is bound by residues G166–S173, F191–V195, D213–G216, N283–D286, and A314–I316. Mg(2+) is bound by residues S173 and T193.

The protein belongs to the TRAFAC class OBG-HflX-like GTPase superfamily. OBG GTPase family. In terms of assembly, monomer. The cofactor is Mg(2+).

It is found in the cytoplasm. Its function is as follows. An essential GTPase which binds GTP, GDP and possibly (p)ppGpp with moderate affinity, with high nucleotide exchange rates and a fairly low GTP hydrolysis rate. Plays a role in control of the cell cycle, stress response, ribosome biogenesis and in those bacteria that undergo differentiation, in morphogenesis control. The polypeptide is GTPase Obg (Psychromonas ingrahamii (strain DSM 17664 / CCUG 51855 / 37)).